The chain runs to 424 residues: Tyrosine--tRNA ligase (424 aa).

Tyr37 is a binding site for L-tyrosine. A 'HIGH' region motif is present at residues 42 to 51 (PTADSLHLGH). Residues Tyr175 and Gln179 each contribute to the L-tyrosine site. The 'KMSKS' region motif lies at 235–239 (KFGKT). An ATP-binding site is contributed by Lys238. An S4 RNA-binding domain is found at 357–414 (ADLQQALVAAELVPSRGQARTLISSNAVSVNGEKQASIDYVFDDADRLYSRYTLLRRG).

Belongs to the class-I aminoacyl-tRNA synthetase family. TyrS type 1 subfamily. Homodimer.

Its subcellular location is the cytoplasm. It catalyses the reaction tRNA(Tyr) + L-tyrosine + ATP = L-tyrosyl-tRNA(Tyr) + AMP + diphosphate + H(+). Functionally, catalyzes the attachment of tyrosine to tRNA(Tyr) in a two-step reaction: tyrosine is first activated by ATP to form Tyr-AMP and then transferred to the acceptor end of tRNA(Tyr). The chain is Tyrosine--tRNA ligase from Sodalis glossinidius (strain morsitans).